Here is a 44-residue protein sequence, read N- to C-terminus: Unknown protein 9 (44 aa).

In Pseudotsuga menziesii (Douglas-fir), this protein is Unknown protein 9.